Consider the following 305-residue polypeptide: Sulfate adenylyltransferase subunit 2 (305 aa).

A disordered region spans residues R283–F305.

The protein belongs to the PAPS reductase family. CysD subfamily. As to quaternary structure, heterodimer composed of CysD, the smaller subunit, and CysN.

It catalyses the reaction sulfate + ATP + H(+) = adenosine 5'-phosphosulfate + diphosphate. It functions in the pathway sulfur metabolism; hydrogen sulfide biosynthesis; sulfite from sulfate: step 1/3. Functionally, with CysN forms the ATP sulfurylase (ATPS) that catalyzes the adenylation of sulfate producing adenosine 5'-phosphosulfate (APS) and diphosphate, the first enzymatic step in sulfur assimilation pathway. APS synthesis involves the formation of a high-energy phosphoric-sulfuric acid anhydride bond driven by GTP hydrolysis by CysN coupled to ATP hydrolysis by CysD. This is Sulfate adenylyltransferase subunit 2 from Caulobacter sp. (strain K31).